We begin with the raw amino-acid sequence, 217 residues long: Adenylate kinase (217 aa).

Glycine 10–threonine 15 contributes to the ATP binding site. The segment at serine 30 to valine 59 is NMP. Residues threonine 31, arginine 36, glutamine 57–valine 59, glycine 85–arginine 88, and glutamine 92 contribute to the AMP site. An LID region spans residues glycine 126–aspartate 163. Arginine 127 contacts ATP. Zn(2+) is bound by residues cysteine 130 and cysteine 133. Serine 136 to tyrosine 137 contacts ATP. 2 residues coordinate Zn(2+): cysteine 150 and cysteine 153. Positions 160 and 171 each coordinate AMP. Glycine 199 is a binding site for ATP.

It belongs to the adenylate kinase family. Monomer.

It localises to the cytoplasm. The catalysed reaction is AMP + ATP = 2 ADP. Its pathway is purine metabolism; AMP biosynthesis via salvage pathway; AMP from ADP: step 1/1. In terms of biological role, catalyzes the reversible transfer of the terminal phosphate group between ATP and AMP. Plays an important role in cellular energy homeostasis and in adenine nucleotide metabolism. The sequence is that of Adenylate kinase from Clostridium kluyveri (strain NBRC 12016).